The chain runs to 257 residues: Deoxyribose-phosphate aldolase (257 aa).

The active-site Proton donor/acceptor is aspartate 102. Residue lysine 166 is the Schiff-base intermediate with acetaldehyde of the active site. The active-site Proton donor/acceptor is the lysine 198.

The protein belongs to the DeoC/FbaB aldolase family. DeoC type 2 subfamily.

Its subcellular location is the cytoplasm. It carries out the reaction 2-deoxy-D-ribose 5-phosphate = D-glyceraldehyde 3-phosphate + acetaldehyde. It participates in carbohydrate degradation; 2-deoxy-D-ribose 1-phosphate degradation; D-glyceraldehyde 3-phosphate and acetaldehyde from 2-deoxy-alpha-D-ribose 1-phosphate: step 2/2. In terms of biological role, catalyzes a reversible aldol reaction between acetaldehyde and D-glyceraldehyde 3-phosphate to generate 2-deoxy-D-ribose 5-phosphate. This chain is Deoxyribose-phosphate aldolase, found in Shewanella piezotolerans (strain WP3 / JCM 13877).